Reading from the N-terminus, the 181-residue chain is GMP synthase [glutamine-hydrolyzing] subunit A (181 aa).

The region spanning 2-181 (KILVVNNYGQ…FDNFLEICRR (180 aa)) is the Glutamine amidotransferase type-1 domain. The Nucleophile role is filled by Cys-72. Catalysis depends on residues His-159 and Glu-161.

Heterodimer composed of a glutamine amidotransferase subunit (A) and a GMP-binding subunit (B).

The catalysed reaction is XMP + L-glutamine + ATP + H2O = GMP + L-glutamate + AMP + diphosphate + 2 H(+). The protein operates within purine metabolism; GMP biosynthesis; GMP from XMP (L-Gln route): step 1/1. Functionally, catalyzes the synthesis of GMP from XMP. This chain is GMP synthase [glutamine-hydrolyzing] subunit A, found in Methanothrix thermoacetophila (strain DSM 6194 / JCM 14653 / NBRC 101360 / PT) (Methanosaeta thermophila).